A 182-amino-acid chain; its full sequence is Adenine phosphoribosyltransferase (182 aa).

The protein belongs to the purine/pyrimidine phosphoribosyltransferase family. In terms of assembly, homodimer.

Its subcellular location is the cytoplasm. The catalysed reaction is AMP + diphosphate = 5-phospho-alpha-D-ribose 1-diphosphate + adenine. It functions in the pathway purine metabolism; AMP biosynthesis via salvage pathway; AMP from adenine: step 1/1. Functionally, catalyzes a salvage reaction resulting in the formation of AMP, that is energically less costly than de novo synthesis. The protein is Adenine phosphoribosyltransferase of Ectopseudomonas mendocina (strain ymp) (Pseudomonas mendocina).